We begin with the raw amino-acid sequence, 295 residues long: Diaminopimelate epimerase (295 aa).

2 residues coordinate substrate: asparagine 13 and asparagine 69. The active-site Proton donor is cysteine 78. Substrate is bound by residues 79 to 80 (GN), asparagine 173, asparagine 212, and 230 to 231 (ER). The active-site Proton acceptor is the cysteine 239. 240 to 241 (GT) is a binding site for substrate.

This sequence belongs to the diaminopimelate epimerase family. Homodimer.

The protein localises to the cytoplasm. It carries out the reaction (2S,6S)-2,6-diaminopimelate = meso-2,6-diaminopimelate. Its pathway is amino-acid biosynthesis; L-lysine biosynthesis via DAP pathway; DL-2,6-diaminopimelate from LL-2,6-diaminopimelate: step 1/1. Catalyzes the stereoinversion of LL-2,6-diaminopimelate (L,L-DAP) to meso-diaminopimelate (meso-DAP), a precursor of L-lysine. This chain is Diaminopimelate epimerase, found in Methanococcus aeolicus (strain ATCC BAA-1280 / DSM 17508 / OCM 812 / Nankai-3).